The sequence spans 356 residues: Pavine N-methyltransferase (356 aa).

S-adenosyl-L-homocysteine contacts are provided by phenylalanine 96, serine 97, glycine 135, asparagine 159, glutamine 163, aspartate 185, valine 186, and valine 201. Positions 96, 97, 135, 159, 163, 185, 186, and 201 each coordinate S-adenosyl-L-methionine. Residue glutamate 205 participates in (S)-tetrahydropapaverine binding. Cysteine 331 is a catalytic residue.

This sequence belongs to the CFA/CMAS family. As to quaternary structure, homodimer.

It localises to the cytoplasm. The catalysed reaction is (+-)-pavine + S-adenosyl-L-methionine = N-methylpavine + S-adenosyl-L-homocysteine + H(+). The enzyme catalyses (S)-reticuline + S-adenosyl-L-methionine = (S)-tembetarine + S-adenosyl-L-homocysteine + H(+). It catalyses the reaction (S)-stylopine + S-adenosyl-L-methionine = (S)-cis-N-methylstylopine + S-adenosyl-L-homocysteine. It carries out the reaction (S)-scoulerine + S-adenosyl-L-methionine = (S)-cis-N-methylscoulerine + S-adenosyl-L-homocysteine. The catalysed reaction is (S)-tetrahydropapaverine + S-adenosyl-L-methionine = (S)-N-methyltetrahydropapaverine + S-adenosyl-L-homocysteine + H(+). The enzyme catalyses (S)-tetrahydropalmatine + S-adenosyl-L-methionine = (S)-cis-N-methyltetrahydropalmatine + S-adenosyl-L-homocysteine. It participates in alkaloid biosynthesis. With respect to regulation, in the presence of a racemic mixture of tetrahydropapaverine (THP), one molecule of (S)-THP binds in a productive mode, while one molecule of (R)-THP is bound next to it in a non-productive mode. The (R)-THP seems to inhibit the release of products from the enzyme when higher concentrations of the racemic substrate are added to the reaction. Functionally, N-methyltransferase with a substrate preference for (+-)-pavine and (S)-reticuline, but also active with the protoberberines scoulerine and stylopine and, to a lesser extent, tetrahydropapaverine (THP) and tetrahydropalmatine. Is not active on (R)-reticuline, cryptopine, glaucine, codeine, canadaline, noscapine and berbamine. The sequence is that of Pavine N-methyltransferase from Thalictrum flavum subsp. glaucum (Yellow meadow rue).